Reading from the N-terminus, the 304-residue chain is Coenzyme PQQ synthesis protein B (304 aa).

The protein belongs to the PqqB family.

Its pathway is cofactor biosynthesis; pyrroloquinoline quinone biosynthesis. May be involved in the transport of PQQ or its precursor to the periplasm. The protein is Coenzyme PQQ synthesis protein B of Pseudomonas aeruginosa (strain ATCC 15692 / DSM 22644 / CIP 104116 / JCM 14847 / LMG 12228 / 1C / PRS 101 / PAO1).